Here is a 1157-residue protein sequence, read N- to C-terminus: DNA-directed RNA polymerase subunit beta (1157 aa).

This sequence belongs to the RNA polymerase beta chain family. The RNAP catalytic core consists of 2 alpha, 1 beta, 1 beta' and 1 omega subunit. When a sigma factor is associated with the core the holoenzyme is formed, which can initiate transcription.

It catalyses the reaction RNA(n) + a ribonucleoside 5'-triphosphate = RNA(n+1) + diphosphate. Its function is as follows. DNA-dependent RNA polymerase catalyzes the transcription of DNA into RNA using the four ribonucleoside triphosphates as substrates. This Tropheryma whipplei (strain Twist) (Whipple's bacillus) protein is DNA-directed RNA polymerase subunit beta.